The following is a 525-amino-acid chain: GMP synthase [glutamine-hydrolyzing] (525 aa).

Residues 9-207 (RILILDFGSQ…VRDICQCEAL (199 aa)) form the Glutamine amidotransferase type-1 domain. The active-site Nucleophile is Cys-86. Active-site residues include His-181 and Glu-183. The region spanning 208–400 (WTPAKIIDDA…LGLPYDMLYR (193 aa)) is the GMPS ATP-PPase domain. ATP is bound at residue 235–241 (SGGVDSS).

Homodimer.

It carries out the reaction XMP + L-glutamine + ATP + H2O = GMP + L-glutamate + AMP + diphosphate + 2 H(+). Its pathway is purine metabolism; GMP biosynthesis; GMP from XMP (L-Gln route): step 1/1. Functionally, catalyzes the synthesis of GMP from XMP. This Escherichia fergusonii (strain ATCC 35469 / DSM 13698 / CCUG 18766 / IAM 14443 / JCM 21226 / LMG 7866 / NBRC 102419 / NCTC 12128 / CDC 0568-73) protein is GMP synthase [glutamine-hydrolyzing].